The primary structure comprises 366 residues: Probable S-adenosyl-L-methionine-binding protein AF_0433 (366 aa).

The TsaA-like domain occupies 6–136; that stretch reads LRQVGVIRSP…YSSTIDSVGN (131 aa). S-adenosyl-L-methionine is bound by residues 23 to 25, 61 to 62, arginine 85, and 116 to 119; these read PHQ, DR, and LDGT.

Belongs to the tRNA methyltransferase O family.

In Archaeoglobus fulgidus (strain ATCC 49558 / DSM 4304 / JCM 9628 / NBRC 100126 / VC-16), this protein is Probable S-adenosyl-L-methionine-binding protein AF_0433.